The primary structure comprises 531 residues: T-complex protein 1 subunit zeta-2 (531 aa).

The protein belongs to the TCP-1 chaperonin family. As to quaternary structure, component of the chaperonin-containing T-complex (TRiC), a heterooligomeric complex of about 850 to 900 kDa that forms two stacked rings, 12 to 16 nm in diameter. In terms of tissue distribution, testis specific.

The protein resides in the cytoplasm. In terms of biological role, component of the chaperonin-containing T-complex (TRiC), a molecular chaperone complex that assists the folding of proteins upon ATP hydrolysis. The chain is T-complex protein 1 subunit zeta-2 (Cct6b) from Mus musculus (Mouse).